Reading from the N-terminus, the 208-residue chain is Large ribosomal subunit protein eL13 (208 aa).

Belongs to the eukaryotic ribosomal protein eL13 family.

In Chlamydomonas sp. (strain W80), this protein is Large ribosomal subunit protein eL13 (RPL13).